Consider the following 294-residue polypeptide: uncharacterized protein (294 aa).

Positions 181–204 (DEPFPTTKNHNNDKRETNDKDDQQ) are disordered. A compositionally biased stretch (basic and acidic residues) spans 190–204 (HNNDKRETNDKDDQQ).

It belongs to the IIV-6 391R family.

This is an uncharacterized protein from Acheta domesticus (House cricket).